A 451-amino-acid chain; its full sequence is Magnesium transporter MgtE (451 aa).

The Cytoplasmic portion of the chain corresponds to 1 to 285; it reads MVQNMTYDEL…TKAYVAAYRR (285 aa). The Mg(2+) site is built by Asp64 and Asp96. 2 CBS domains span residues 140-203 and 204-260; these read MTNR…VQDL and MFTR…EADE. Glu218, Asp228, Asp249, Asp252, Glu257, Glu260, and Asp261 together coordinate Mg(2+). Residues 286 to 306 form a helical membrane-spanning segment; it reads LPWLILLLFIGLISGSIISYF. Residues 307-311 lie on the Extracellular side of the membrane; sequence EDALK. The helical transmembrane segment at 312 to 332 threads the bilayer; it reads QVVALAFFMPMVSGMTGNTGT. Topologically, residues 333 to 371 are cytoplasmic; it reads QSLAVVIRGLSKEEMNKKTIVRLIFREFRTSIFIGAVCS. The next 2 helical transmembrane spans lie at 372–392 and 393–413; these read VLIAIVSIIWQGNALLGFVVA and SSLFLTLIIGTMSGTIIPIIL. At 414 to 427 the chain is on the cytoplasmic side; the sequence is HKLKVDPAIASGPL. Mg(2+) contacts are provided by Asp419 and Asp433. Residues 428-448 traverse the membrane as a helical segment; the sequence is ITTLNDILSLLIYFGIATAFI. The Extracellular segment spans residues 449-451; it reads HSL.

The protein belongs to the SLC41A transporter family. Homodimer.

It localises to the cell membrane. The enzyme catalyses Mg(2+)(in) = Mg(2+)(out). Binds cyclic di-AMP (c-di-AMP), which may regulate the transporter activity. In terms of biological role, acts as a magnesium transporter. MgtE is the dominant transporter under rich-medium growth conditions, and it may provide the primary route of magnesium import in B.subtilis, while the other putative transport proteins are likely to be utilized for more-specialized growth conditions. This is Magnesium transporter MgtE from Bacillus subtilis (strain 168).